Consider the following 233-residue polypeptide: Methylthioribulose-1-phosphate dehydratase (233 aa).

Residue C91 participates in substrate binding. 2 residues coordinate Zn(2+): H108 and H110. The active-site Proton donor/acceptor is the E137. H194 provides a ligand contact to Zn(2+).

This sequence belongs to the aldolase class II family. MtnB subfamily. It depends on Zn(2+) as a cofactor.

Its subcellular location is the cytoplasm. It catalyses the reaction 5-(methylsulfanyl)-D-ribulose 1-phosphate = 5-methylsulfanyl-2,3-dioxopentyl phosphate + H2O. It participates in amino-acid biosynthesis; L-methionine biosynthesis via salvage pathway; L-methionine from S-methyl-5-thio-alpha-D-ribose 1-phosphate: step 2/6. Its function is as follows. Catalyzes the dehydration of methylthioribulose-1-phosphate (MTRu-1-P) into 2,3-diketo-5-methylthiopentyl-1-phosphate (DK-MTP-1-P). The chain is Methylthioribulose-1-phosphate dehydratase from Phaeosphaeria nodorum (strain SN15 / ATCC MYA-4574 / FGSC 10173) (Glume blotch fungus).